The sequence spans 546 residues: Chaperonin GroEL (546 aa).

ATP-binding positions include 29 to 32, Lys50, 86 to 90, Gly414, and Asp492; these read TMGP and DGTTT.

Belongs to the chaperonin (HSP60) family. In terms of assembly, forms a cylinder of 14 subunits composed of two heptameric rings stacked back-to-back. Interacts with the co-chaperonin GroES.

Its subcellular location is the cytoplasm. It carries out the reaction ATP + H2O + a folded polypeptide = ADP + phosphate + an unfolded polypeptide.. In terms of biological role, together with its co-chaperonin GroES, plays an essential role in assisting protein folding. The GroEL-GroES system forms a nano-cage that allows encapsulation of the non-native substrate proteins and provides a physical environment optimized to promote and accelerate protein folding. The sequence is that of Chaperonin GroEL from Helicobacter pylori (strain ATCC 700392 / 26695) (Campylobacter pylori).